A 279-amino-acid chain; its full sequence is MKKFFPFRGKRKTDDSHSHSSEVPISLAKTAPPSLSIGGGYHLRDKHLKKLHKAATIGNEQKLKDYLERKKYNVNGRDKRSRTPLHLACANGYTNIVSLLIENQCKINVQDSENRTPLIKAVECQQESCATVLLLHGADPNLVDVYSNTALHYAVCGQNISLANKLLQYKANLEAKNKDGHTPLLLAVAENNENMVKFLLKKGADVNASDKNHRTAIMIALIVEPTSSVKLLLQQDTDLAHKDIYGFTAEEYASFNGFTMYHHITANNENKKKTEQTAY.

A compositionally biased stretch (basic residues) spans 1–11 (MKKFFPFRGKR). The segment at 1–25 (MKKFFPFRGKRKTDDSHSHSSEVPI) is disordered. ANK repeat units follow at residues 80 to 109 (RSRT…KINV), 113 to 142 (ENRT…DPNL), 146 to 175 (YSNT…NLEA), 179 to 208 (DGHT…DVNA), and 212 to 241 (NHRT…DLAH).

In Mus musculus (Mouse), this protein is Ankyrin repeat domain-containing protein 7 (Ankrd7).